A 476-amino-acid polypeptide reads, in one-letter code: Glucose-1-phosphate adenylyltransferase (476 aa).

Residues tyrosine 114, glycine 179, 194-195 (EK), and serine 212 contribute to the alpha-D-glucose 1-phosphate site.

Belongs to the bacterial/plant glucose-1-phosphate adenylyltransferase family. In terms of assembly, homotetramer.

The enzyme catalyses alpha-D-glucose 1-phosphate + ATP + H(+) = ADP-alpha-D-glucose + diphosphate. The protein operates within glycan biosynthesis; glycogen biosynthesis. Its function is as follows. Involved in the biosynthesis of ADP-glucose, a building block required for the elongation reactions to produce glycogen. Catalyzes the reaction between ATP and alpha-D-glucose 1-phosphate (G1P) to produce pyrophosphate and ADP-Glc. The protein is Glucose-1-phosphate adenylyltransferase of Yersinia pestis.